We begin with the raw amino-acid sequence, 77 residues long: Dermatoxin-B1 (77 aa).

The first 22 residues, 1-22 (MAFLKKSLFLVLFLGLVPLSLC), serve as a signal peptide directing secretion. The propeptide occupies 23 to 42 (ESEKREGENEEEQEDDQSEE). The interval 24–45 (SEKREGENEEEQEDDQSEEKRS) is disordered. Residues 30–40 (ENEEEQEDDQS) are compositionally biased toward acidic residues. A Glutamine amide modification is found at Gln-76.

It belongs to the frog skin active peptide (FSAP) family. Dermatoxin subfamily. Highest expression in skin and to a lesser extent in brain and intestine.

Its subcellular location is the secreted. It is found in the target cell membrane. In terms of biological role, possesses a potent antimicrobial activity against Gram-positive bacteria B.megaterium, C.glutamicum and S.aureus and mollicutes A.laidlawii and S.melliferum. Less active against Gram-negative bacteria B.cepacia, P.aeruginosa, S.typhimurium and S.meliloti. Probably acts by disturbing membrane functions with its amphipathic structure. The chain is Dermatoxin-B1 from Phyllomedusa bicolor (Two-colored leaf frog).